The following is a 645-amino-acid chain: 1,4-alpha-glucan branching enzyme GlgB (645 aa).

Residue D309 is the Nucleophile of the active site. E352 serves as the catalytic Proton donor. The interval 619 to 645 is disordered; sequence VKTRKGSKKQDGSKTKVRSNVTSRGKR. A compositionally biased stretch (polar residues) spans 636–645; that stretch reads RSNVTSRGKR.

The protein belongs to the glycosyl hydrolase 13 family. GlgB subfamily. In terms of assembly, monomer.

It carries out the reaction Transfers a segment of a (1-&gt;4)-alpha-D-glucan chain to a primary hydroxy group in a similar glucan chain.. The protein operates within glycan biosynthesis; glycogen biosynthesis. In terms of biological role, catalyzes the formation of the alpha-1,6-glucosidic linkages in glycogen by scission of a 1,4-alpha-linked oligosaccharide from growing alpha-1,4-glucan chains and the subsequent attachment of the oligosaccharide to the alpha-1,6 position. The protein is 1,4-alpha-glucan branching enzyme GlgB of Bacillus cereus (strain 03BB102).